Here is a 221-residue protein sequence, read N- to C-terminus: Small ribosomal subunit protein uS3 (221 aa).

The region spanning 39–107 is the KH type-2 domain; sequence IREYIKRKLY…QVHVNIVEVK (69 aa).

Belongs to the universal ribosomal protein uS3 family. In terms of assembly, part of the 30S ribosomal subunit. Forms a tight complex with proteins S10 and S14.

Its function is as follows. Binds the lower part of the 30S subunit head. Binds mRNA in the 70S ribosome, positioning it for translation. The sequence is that of Small ribosomal subunit protein uS3 from Desulforamulus reducens (strain ATCC BAA-1160 / DSM 100696 / MI-1) (Desulfotomaculum reducens).